Consider the following 261-residue polypeptide: uncharacterized protein (261 aa).

The N-terminal stretch at Met1–Ser22 is a signal peptide. Residue Cys23 is the site of N-palmitoyl cysteine attachment. Cys23 carries the S-diacylglycerol cysteine lipid modification.

The protein belongs to the staphylococcal tandem lipoprotein family.

The protein resides in the cell membrane. This is an uncharacterized protein from Staphylococcus aureus (strain bovine RF122 / ET3-1).